We begin with the raw amino-acid sequence, 206 residues long: Small ribosomal subunit protein uS4 (206 aa).

Residues 96–156 (SRLDNVVYRM…EKSKKQLRIQ (61 aa)) enclose the S4 RNA-binding domain.

Belongs to the universal ribosomal protein uS4 family. Part of the 30S ribosomal subunit. Contacts protein S5. The interaction surface between S4 and S5 is involved in control of translational fidelity.

Functionally, one of the primary rRNA binding proteins, it binds directly to 16S rRNA where it nucleates assembly of the body of the 30S subunit. With S5 and S12 plays an important role in translational accuracy. This chain is Small ribosomal subunit protein uS4, found in Francisella philomiragia subsp. philomiragia (strain ATCC 25017 / CCUG 19701 / FSC 153 / O#319-036).